A 396-amino-acid chain; its full sequence is L-tyrosine/L-aspartate decarboxylase (396 aa).

An N6-(pyridoxal phosphate)lysine modification is found at K245.

Belongs to the group II decarboxylase family. MfnA subfamily. As to quaternary structure, homodimer. Requires pyridoxal 5'-phosphate as cofactor.

It carries out the reaction L-tyrosine + H(+) = tyramine + CO2. The catalysed reaction is L-aspartate + H(+) = beta-alanine + CO2. Its pathway is cofactor biosynthesis; methanofuran biosynthesis. It functions in the pathway cofactor biosynthesis; coenzyme A biosynthesis. Inhibited by hydroxylamine and O-methylhydroxylamine. Its function is as follows. Catalyzes the decarboxylation of L-tyrosine to produce tyramine for methanofuran biosynthesis. Can also catalyze the decarboxylation of L-aspartate to produce beta-alanine for coenzyme A (CoA) biosynthesis. This Methanocaldococcus jannaschii (strain ATCC 43067 / DSM 2661 / JAL-1 / JCM 10045 / NBRC 100440) (Methanococcus jannaschii) protein is L-tyrosine/L-aspartate decarboxylase.